Here is a 138-residue protein sequence, read N- to C-terminus: Acid shock protein (138 aa).

An N-terminal signal peptide occupies residues 1-21; it reads MKKVLALIVAATMGLSSVAFA. A propeptide spanning residues 22–85 is cleaved from the precursor; it reads ADAVAPAAAA…TKKAPAQKAQ (64 aa). Over residues 31-50 the composition is skewed to low complexity; that stretch reads APAATTTAAPAAAATKAPAK. Positions 31–138 are disordered; that stretch reads APAATTTAAP…ATKKAAPAAK (108 aa). Composition is skewed to basic residues over residues 51–77 and 122–131; these read ATHH…KATK and AAKKHHKATK.

It belongs to the Asr family. Proteolytic processing gives rise to the active protein.

Its subcellular location is the periplasm. In terms of biological role, required for growth and/or survival at acidic conditions. This chain is Acid shock protein, found in Serratia proteamaculans (strain 568).